Here is a 421-residue protein sequence, read N- to C-terminus: Tyrosine--tRNA ligase 1 (421 aa).

Residue tyrosine 35 coordinates L-tyrosine. The 'HIGH' region motif lies at 40–49 (PTADSLHIGH). Residues tyrosine 170 and glutamine 174 each coordinate L-tyrosine. Residues 231–235 (KFGKT) carry the 'KMSKS' region motif. Lysine 234 serves as a coordination point for ATP. Residues 354–420 (LPLVEILVQS…GKKKYFLLTY (67 aa)) enclose the S4 RNA-binding domain.

This sequence belongs to the class-I aminoacyl-tRNA synthetase family. TyrS type 1 subfamily. In terms of assembly, homodimer.

Its subcellular location is the cytoplasm. The catalysed reaction is tRNA(Tyr) + L-tyrosine + ATP = L-tyrosyl-tRNA(Tyr) + AMP + diphosphate + H(+). Catalyzes the attachment of tyrosine to tRNA(Tyr) in a two-step reaction: tyrosine is first activated by ATP to form Tyr-AMP and then transferred to the acceptor end of tRNA(Tyr). The polypeptide is Tyrosine--tRNA ligase 1 (Bacillus licheniformis (strain ATCC 14580 / DSM 13 / JCM 2505 / CCUG 7422 / NBRC 12200 / NCIMB 9375 / NCTC 10341 / NRRL NRS-1264 / Gibson 46)).